Reading from the N-terminus, the 273-residue chain is Putative pyruvate, phosphate dikinase regulatory protein (273 aa).

153 to 160 (GVSRTSKT) contacts ADP.

Belongs to the pyruvate, phosphate/water dikinase regulatory protein family. PDRP subfamily.

It carries out the reaction N(tele)-phospho-L-histidyl/L-threonyl-[pyruvate, phosphate dikinase] + ADP = N(tele)-phospho-L-histidyl/O-phospho-L-threonyl-[pyruvate, phosphate dikinase] + AMP + H(+). The catalysed reaction is N(tele)-phospho-L-histidyl/O-phospho-L-threonyl-[pyruvate, phosphate dikinase] + phosphate + H(+) = N(tele)-phospho-L-histidyl/L-threonyl-[pyruvate, phosphate dikinase] + diphosphate. Functionally, bifunctional serine/threonine kinase and phosphorylase involved in the regulation of the pyruvate, phosphate dikinase (PPDK) by catalyzing its phosphorylation/dephosphorylation. In Sinorhizobium medicae (strain WSM419) (Ensifer medicae), this protein is Putative pyruvate, phosphate dikinase regulatory protein.